The chain runs to 28 residues: Cytochrome b6-f complex subunit 6 (28 aa).

Residues 2 to 22 traverse the membrane as a helical segment; it reads VEYLVILSGMFGLALACFFGL.

Belongs to the PetL family. As to quaternary structure, the 4 large subunits of the cytochrome b6-f complex are cytochrome b6, subunit IV (17 kDa polypeptide, PetD), cytochrome f and the Rieske protein, while the 4 small subunits are PetG, PetL, PetM and PetN. The complex functions as a dimer.

Its subcellular location is the plastid. It localises to the cyanelle thylakoid membrane. Functionally, component of the cytochrome b6-f complex, which mediates electron transfer between photosystem II (PSII) and photosystem I (PSI), cyclic electron flow around PSI, and state transitions. PetL is important for photoautotrophic growth as well as for electron transfer efficiency and stability of the cytochrome b6-f complex. The chain is Cytochrome b6-f complex subunit 6 from Cyanophora paradoxa.